The sequence spans 98 residues: NADH-ubiquinone oxidoreductase chain 4L (98 aa).

Helical transmembrane passes span proline 2 to phenylalanine 22, serine 29 to leucine 49, and isoleucine 61 to valine 81.

This sequence belongs to the complex I subunit 4L family. Core subunit of respiratory chain NADH dehydrogenase (Complex I) which is composed of 45 different subunits.

The protein resides in the mitochondrion inner membrane. It catalyses the reaction a ubiquinone + NADH + 5 H(+)(in) = a ubiquinol + NAD(+) + 4 H(+)(out). Its function is as follows. Core subunit of the mitochondrial membrane respiratory chain NADH dehydrogenase (Complex I) which catalyzes electron transfer from NADH through the respiratory chain, using ubiquinone as an electron acceptor. Part of the enzyme membrane arm which is embedded in the lipid bilayer and involved in proton translocation. The polypeptide is NADH-ubiquinone oxidoreductase chain 4L (MT-ND4L) (Avahi occidentalis (Western woolly lemur)).